Consider the following 596-residue polypeptide: Ulvan-active sulfatase (596 aa).

A signal peptide spans 1 to 27 (MLFLRFKFFNNRLLFVSVLCFVICVSC). Ca(2+)-binding residues include Glu58, Asp59, Cys97, Asp306, and His307. Residue Cys97 is the Nucleophile of the active site. 3-oxoalanine (Cys) is present on Cys97.

Belongs to the sulfatase family. The cofactor is Ca(2+). In terms of processing, the conversion to 3-oxoalanine (also known as C-formylglycine, FGly), of a serine or cysteine residue in prokaryotes and of a cysteine residue in eukaryotes, is critical for catalytic activity.

It localises to the periplasm. Sulfatase involved in ulvan degradation. Ulvan is the main polysaccharide component of the Ulvales (green seaweed) cell wall. It is composed of disaccharide building blocks comprising 3-sulfated rhamnose (Rha3S) linked to D-glucuronic acid (GlcA), L-iduronic acid (IduA), or D-xylose (Xyl). The sulfatase desulfates Xyl2S-Rha3S, product of the degradation of ulvan by endo-acting alpha-1,4-L-rhamnosidase, to Xyl-Rha3S. In Formosa agariphila (strain DSM 15362 / KCTC 12365 / LMG 23005 / KMM 3901 / M-2Alg 35-1), this protein is Ulvan-active sulfatase.